The sequence spans 208 residues: Probable GTP-binding protein EngB (208 aa).

Residues 18–187 (KQFEICVIGR…FALMKKVVIQ (170 aa)) form the EngB-type G domain. GTP contacts are provided by residues 26 to 33 (GRSNVGKS), 52 to 56 (GRTQL), 69 to 72 (DLPG), 135 to 138 (NKLD), and 166 to 168 (VSA). Mg(2+)-binding residues include serine 33 and threonine 54.

It belongs to the TRAFAC class TrmE-Era-EngA-EngB-Septin-like GTPase superfamily. EngB GTPase family. Requires Mg(2+) as cofactor.

In terms of biological role, necessary for normal cell division and for the maintenance of normal septation. This Ureaplasma parvum serovar 3 (strain ATCC 27815 / 27 / NCTC 11736) protein is Probable GTP-binding protein EngB.